Here is a 227-residue protein sequence, read N- to C-terminus: Lysosomal-associated transmembrane protein 4B (227 aa).

4 helical membrane-spanning segments follow: residues 26–46 (ILLG…LLSA), 72–92 (MCIA…ATYG), 100–120 (WIIP…LVAI), and 153–173 (CLVL…GYLI). The tract at residues 205 to 222 (PPYDDATAVTGTAKEPPP) is required for NEDD4 interaction.

It belongs to the LAPTM4/LAPTM5 transporter family. Homooligomer; upon reaching the lysosomes. Interacts with MCOLN1. Interacts with NEDD4; may play a role in the lysosomal sorting of LAPTM4B; enhances HGS association with NEDD4; mediates inhibition of EGFR degradation. Interacts with PIP5K1C; promotes SNX5 association with LAPTM4B; kinase activity of PIP5K1C is required; interaction is regulated by phosphatidylinositol 4,5-bisphosphate generated by PIP5K1C. Interacts with HGS; promotes HGS ubiquitination. Interacts with SNX5. Interacts with SLC3A2 and SLC7A5; recruits SLC3A2 and SLC7A5 to lysosomes to promote leucine uptake into these organelles and is required for mTORC1 activation. Interacts with LRRC32; decreases TGFB1 production in regulatory T cells. Interacts with BECN1; competes with EGFR for LAPTM4B binding; regulates EGFR activity. Interacts with EGFR; positively correlates with EGFR activation. In terms of processing, undergoes proteolytic cleavage following delivery to the lysosomes. Post-translationally, ubiquitinated by NEDD4.

It is found in the endomembrane system. The protein localises to the late endosome membrane. It localises to the cell membrane. The protein resides in the cell projection. Its subcellular location is the lysosome membrane. It is found in the endosome membrane. The protein localises to the endosome. It localises to the multivesicular body membrane. The protein resides in the multivesicular body lumen. Its function is as follows. Required for optimal lysosomal function. Blocks EGF-stimulated EGFR intraluminal sorting and degradation. Conversely by binding with the phosphatidylinositol 4,5-bisphosphate, regulates its PIP5K1C interaction, inhibits HGS ubiquitination and relieves LAPTM4B inhibition of EGFR degradation. Recruits SLC3A2 and SLC7A5 (the Leu transporter) to the lysosome, promoting entry of leucine and other essential amino acid (EAA) into the lysosome, stimulating activation of proton-transporting vacuolar (V)-ATPase protein pump (V-ATPase) and hence mTORC1 activation. Plays a role as negative regulator of TGFB1 production in regulatory T cells. Binds ceramide and facilitates its exit from late endosome in order to control cell death pathways. The polypeptide is Lysosomal-associated transmembrane protein 4B (Rattus norvegicus (Rat)).